The primary structure comprises 168 residues: DOMON domain-containing protein CBG21753 (168 aa).

The first 17 residues, 1–17, serve as a signal peptide directing secretion; sequence MIKSMILVALILAFASA. Residues 25 to 143 enclose the DOMON domain; that stretch reads SGFQSYWRFA…CQKWRWIKSG (119 aa). N-linked (GlcNAc...) asparagine glycosylation is found at N35 and N94. Positions 148 to 168 are disordered; sequence GQLTRNSKSPKDKKVCPMECN. Residues 156–168 show a composition bias toward basic and acidic residues; the sequence is SPKDKKVCPMECN.

The protein resides in the secreted. The protein is DOMON domain-containing protein CBG21753 of Caenorhabditis briggsae.